Here is a 526-residue protein sequence, read N- to C-terminus: Cholesterol side-chain cleavage enzyme, mitochondrial (526 aa).

The N-terminal 36 residues, 1-36 (MLAKGLSLRSVLVKGCQPFLSPTWQGPVLSTGKGAG), are a transit peptide targeting the mitochondrion. The span at 30-41 (STGKGAGTSTSS) shows a compositional bias: low complexity. The interval 30-49 (STGKGAGTSTSSPRSFNEIP) is disordered. A heme-binding site is contributed by cysteine 458.

This sequence belongs to the cytochrome P450 family. In terms of assembly, interacts with FDX1/adrenodoxin. Requires heme as cofactor.

It localises to the mitochondrion inner membrane. It carries out the reaction 6 reduced [adrenodoxin] + cholesterol + 3 O2 + 6 H(+) = 4-methylpentanal + pregnenolone + 6 oxidized [adrenodoxin] + 4 H2O. The catalysed reaction is 2 reduced [adrenodoxin] + cholesterol + O2 + 2 H(+) = (22R)-hydroxycholesterol + 2 oxidized [adrenodoxin] + H2O. It catalyses the reaction (22R)-hydroxycholesterol + 2 reduced [adrenodoxin] + O2 + 2 H(+) = (20R,22R)-20,22-dihydroxycholesterol + 2 oxidized [adrenodoxin] + H2O. The enzyme catalyses (20R,22R)-20,22-dihydroxycholesterol + 2 reduced [adrenodoxin] + O2 + 2 H(+) = 4-methylpentanal + pregnenolone + 2 oxidized [adrenodoxin] + 2 H2O. It participates in lipid metabolism; C21-steroid hormone metabolism. Its pathway is steroid metabolism; cholesterol metabolism. Its function is as follows. A cytochrome P450 monooxygenase that catalyzes the side-chain hydroxylation and cleavage of cholesterol to pregnenolone, the precursor of most steroid hormones. Catalyzes three sequential oxidation reactions of cholesterol, namely the hydroxylation at C22 followed with the hydroxylation at C20 to yield 20R,22R-hydroxycholesterol that is further cleaved between C20 and C22 to yield the C21-steroid pregnenolone and 4-methylpentanal. Mechanistically, uses molecular oxygen inserting one oxygen atom into a substrate and reducing the second into a water molecule. Two electrons are provided by NADPH via a two-protein mitochondrial transfer system comprising flavoprotein FDXR (adrenodoxin/ferredoxin reductase) and nonheme iron-sulfur protein FDX1 or FDX2 (adrenodoxin/ferredoxin). The chain is Cholesterol side-chain cleavage enzyme, mitochondrial from Mus musculus (Mouse).